We begin with the raw amino-acid sequence, 180 residues long: Phosphoribosylaminoimidazole carboxylase (180 aa).

Substrate is bound by residues S35, D38, S62, K65, G89, and S91.

This sequence belongs to the AIR carboxylase family. Class II subfamily.

It catalyses the reaction 5-amino-1-(5-phospho-D-ribosyl)imidazole-4-carboxylate + H(+) = 5-amino-1-(5-phospho-beta-D-ribosyl)imidazole + CO2. The protein operates within purine metabolism; IMP biosynthesis via de novo pathway; 5-amino-1-(5-phospho-D-ribosyl)imidazole-4-carboxylate from 5-amino-1-(5-phospho-D-ribosyl)imidazole (carboxylase route): step 1/1. Functionally, catalyzes the reversible conversion of 5-aminoimidazole ribonucleotide (AIR) and CO(2) to 4-carboxy-5-aminoimidazole ribonucleotide (CAIR). This chain is Phosphoribosylaminoimidazole carboxylase, found in Archaeoglobus fulgidus (strain ATCC 49558 / DSM 4304 / JCM 9628 / NBRC 100126 / VC-16).